A 788-amino-acid polypeptide reads, in one-letter code: Protein translocase subunit SecA 2 (788 aa).

ATP contacts are provided by residues Q77, G95 to T99, and D491.

The protein belongs to the SecA family. Monomer and homodimer. Part of the essential Sec protein translocation apparatus which comprises SecA, SecYEG and auxiliary proteins SecDF. Other proteins may also be involved.

The protein localises to the cell membrane. Its subcellular location is the cytoplasm. It carries out the reaction ATP + H2O + cellular proteinSide 1 = ADP + phosphate + cellular proteinSide 2.. Its function is as follows. Part of the Sec protein translocase complex. Interacts with the SecYEG preprotein conducting channel. Has a central role in coupling the hydrolysis of ATP to the transfer of proteins into and across the cell membrane, serving as an ATP-driven molecular motor driving the stepwise translocation of polypeptide chains across the membrane. The sequence is that of Protein translocase subunit SecA 2 from Lactobacillus johnsonii (strain CNCM I-12250 / La1 / NCC 533).